The primary structure comprises 190 residues: Transcription factor E (190 aa).

Residues 4-87 enclose the HTH TFE/IIEalpha-type domain; it reads KNKALLEIAK…YWHLETKRLP (84 aa). Positions 170–190 are disordered; sequence PSPKKEKKKTRAKAKRKTRKK. A compositionally biased stretch (basic residues) spans 174-190; it reads KEKKKTRAKAKRKTRKK.

Belongs to the TFE family. In terms of assembly, monomer. Interaction with RNA polymerase subunits RpoF and RpoE is necessary for Tfe stimulatory transcription activity. Able to interact with Tbp and RNA polymerase in the absence of DNA promoter. Interacts both with the preinitiation and elongation complexes.

Functionally, transcription factor that plays a role in the activation of archaeal genes transcribed by RNA polymerase. Facilitates transcription initiation by enhancing TATA-box recognition by TATA-box-binding protein (Tbp), and transcription factor B (Tfb) and RNA polymerase recruitment. Not absolutely required for transcription in vitro, but particularly important in cases where Tbp or Tfb function is not optimal. It dynamically alters the nucleic acid-binding properties of RNA polymerases by stabilizing the initiation complex and destabilizing elongation complexes. Seems to translocate with the RNA polymerase following initiation and acts by binding to the non template strand of the transcription bubble in elongation complexes. The polypeptide is Transcription factor E (Pyrococcus abyssi (strain GE5 / Orsay)).